A 359-amino-acid polypeptide reads, in one-letter code: Peptide chain release factor 1 (359 aa).

At glutamine 235 the chain carries N5-methylglutamine.

This sequence belongs to the prokaryotic/mitochondrial release factor family. Post-translationally, methylated by PrmC. Methylation increases the termination efficiency of RF1.

It is found in the cytoplasm. Its function is as follows. Peptide chain release factor 1 directs the termination of translation in response to the peptide chain termination codons UAG and UAA. The chain is Peptide chain release factor 1 from Nitrosomonas europaea (strain ATCC 19718 / CIP 103999 / KCTC 2705 / NBRC 14298).